We begin with the raw amino-acid sequence, 431 residues long: Divalent metal cation transporter MntH (431 aa).

Transmembrane regions (helical) follow at residues 33-53 (LLKF…PGNF), 61-81 (SSFN…AIFL), 110-130 (WIFW…EFIG), 141-161 (IPMI…VYME), 170-190 (TIIA…LFLA), 211-231 (AVLI…IYLH), 258-278 (ILIA…VSAA), 307-327 (GAFG…GTMA), 347-367 (IITM…MRVL), 368-388 (VLSQ…MLLI), and 406-426 (IVGF…LYLT).

It belongs to the NRAMP family.

It localises to the cell membrane. Its function is as follows. H(+)-stimulated, divalent metal cation uptake system. This chain is Divalent metal cation transporter MntH, found in Clostridium acetobutylicum (strain ATCC 824 / DSM 792 / JCM 1419 / IAM 19013 / LMG 5710 / NBRC 13948 / NRRL B-527 / VKM B-1787 / 2291 / W).